Consider the following 351-residue polypeptide: MSLLPYALARSFLFGMDAEAAHELTMDMLARGQRTPLQWAWCNETVSDPIELAGLRFPNRVGLAAGLDKNARCIDALAAMGFGFVEVGTVTPRAQPGNPKPRMFRLPEARALINRLGFNNEGLDAFVANVQRSQVRTQGRGQSKLLLGLNIGKNATTPIEDATRDYLTCLEGVYPHADYVTVNISSPNTQNLRALQSDAALDCLLGAIAEHRGQLAAAQGRRVPIFVKIAPDLDEAQVAVIATTLQRHGMDGVVATNTTIRRDAVQGLRHAGETGGLSGAPVLEASNAVIRQLRAALGPAFPIIGVGGILSAEDAVSKIRAGADVVQIYTGLIYEGPALVGRAAKAIRDLR.

FMN-binding positions include 65–69 (AGLDK) and T89. K69 is a binding site for substrate. Residue 114 to 118 (NRLGF) coordinates substrate. FMN-binding residues include N150 and N183. N183 provides a ligand contact to substrate. The active-site Nucleophile is S186. N188 is a binding site for substrate. FMN is bound by residues K228 and T256. 257–258 (NT) is a binding site for substrate. FMN contacts are provided by residues G279, G308, and 329 to 330 (YT).

Belongs to the dihydroorotate dehydrogenase family. Type 2 subfamily. Monomer. Requires FMN as cofactor.

Its subcellular location is the cell membrane. The enzyme catalyses (S)-dihydroorotate + a quinone = orotate + a quinol. It participates in pyrimidine metabolism; UMP biosynthesis via de novo pathway; orotate from (S)-dihydroorotate (quinone route): step 1/1. Catalyzes the conversion of dihydroorotate to orotate with quinone as electron acceptor. In Acidovorax ebreus (strain TPSY) (Diaphorobacter sp. (strain TPSY)), this protein is Dihydroorotate dehydrogenase (quinone).